The sequence spans 474 residues: Methylenetetrahydrofolate--tRNA-(uracil-5-)-methyltransferase TrmFO (474 aa).

FAD is bound at residue 15–20 (GAGLAG). Residues 453-474 (PLLPTAPDTTGAAGEETTQAES) are disordered.

It belongs to the MnmG family. TrmFO subfamily. Requires FAD as cofactor.

It localises to the cytoplasm. It catalyses the reaction uridine(54) in tRNA + (6R)-5,10-methylene-5,6,7,8-tetrahydrofolate + NADH + H(+) = 5-methyluridine(54) in tRNA + (6S)-5,6,7,8-tetrahydrofolate + NAD(+). It carries out the reaction uridine(54) in tRNA + (6R)-5,10-methylene-5,6,7,8-tetrahydrofolate + NADPH + H(+) = 5-methyluridine(54) in tRNA + (6S)-5,6,7,8-tetrahydrofolate + NADP(+). Catalyzes the folate-dependent formation of 5-methyl-uridine at position 54 (M-5-U54) in all tRNAs. The polypeptide is Methylenetetrahydrofolate--tRNA-(uracil-5-)-methyltransferase TrmFO (Nitratidesulfovibrio vulgaris (strain ATCC 29579 / DSM 644 / CCUG 34227 / NCIMB 8303 / VKM B-1760 / Hildenborough) (Desulfovibrio vulgaris)).